Reading from the N-terminus, the 96-residue chain is Dynein light chain roadblock-type 2 (96 aa).

Position 2 is an N-acetylalanine (alanine 2).

Belongs to the GAMAD family. As to quaternary structure, homodimer. The cytoplasmic dynein 1 complex consists of two catalytic heavy chains (HCs) and a number of non-catalytic subunits presented by intermediate chains (ICs), light intermediate chains (LICs) and light chains (LCs); the composition seems to vary in respect to the IC, LIC and LC composition. The heavy chain homodimer serves as a scaffold for the probable homodimeric assembly of the respective non-catalytic subunits. The ICs and LICs bind directly to the HC dimer and the LCs assemble on the IC dimer. Interacts with DYNC1I1 and DYNC1I2. Self-associates. Interacts with DYNLRB1.

It is found in the cytoplasm. The protein localises to the cytoskeleton. Acts as one of several non-catalytic accessory components of the cytoplasmic dynein 1 complex that are thought to be involved in linking dynein to cargos and to adapter proteins that regulate dynein function. Cytoplasmic dynein 1 acts as a motor for the intracellular retrograde motility of vesicles and organelles along microtubules. The protein is Dynein light chain roadblock-type 2 (DYNLRB2) of Bos taurus (Bovine).